Here is a 155-residue protein sequence, read N- to C-terminus: RNA-binding protein 3 (155 aa).

Residues 6 to 84 (GKLFVGGLNF…RQIRVDHAGK (79 aa)) form the RRM domain. An Omega-N-methylarginine modification is found at arginine 47. Residues 79 to 155 (VDHAGKSARG…GGNYRDNYDN (77 aa)) are disordered. Position 105 is an asymmetric dimethylarginine; alternate (arginine 105). Arginine 105 carries the post-translational modification Dimethylated arginine; alternate. Omega-N-methylarginine; alternate is present on arginine 105. Residues 105 to 114 (RGGGDQGYGS) are compositionally biased toward gly residues. Omega-N-methylarginine is present on residues arginine 120 and arginine 130. Serine 135 and serine 145 each carry phosphoserine. Tyrosine 153 carries the post-translational modification Phosphotyrosine.

As to quaternary structure, interacts with RPL4. Associates with the 60S ribosomal subunits. Post-translationally, arg-105 is dimethylated, probably to asymmetric dimethylarginine. In terms of processing, phosphorylated. Isoform 2 is methylated. As to expression, widely expressed in the brain. Highly expressed in the cerebellum and olfactory bulb (at protein level). Expressed in neurons and glial cells.

It is found in the nucleus. It localises to the cytoplasm. The protein resides in the cell projection. Its subcellular location is the dendrite. Functionally, cold-inducible mRNA binding protein that enhances global protein synthesis at both physiological and mild hypothermic temperatures. Reduces the relative abundance of microRNAs, when overexpressed. Enhances phosphorylation of translation initiation factors and active polysome formation. The polypeptide is RNA-binding protein 3 (Rbm3) (Rattus norvegicus (Rat)).